Consider the following 287-residue polypeptide: Cyclopropane mycolic acid synthase 1 (287 aa).

S-adenosyl-L-methionine contacts are provided by residues 33-34 (YS), 68-76 (LLDVGCGWG), 94-99 (TLSKNQ), and 123-124 (WE). The active site involves C269.

Belongs to the CFA/CMAS family. As to quaternary structure, homodimer.

It is found in the cytoplasm. It carries out the reaction a 1-acyl-2-(9Z)-enoyl-sn-glycero-3-phospholipid + S-adenosyl-L-methionine = a 1-acyl-2-(9-cyclopronane)-acyl-sn-glycero-3-phospholipid + S-adenosyl-L-homocysteine + H(+). Its pathway is lipid metabolism; mycolic acid biosynthesis. Functionally, catalyzes the conversion of a double bond to a cyclopropane ring at the distal position of an alpha mycolic acid via the transfer of a methylene group from S-adenosyl-L-methionine. Cyclopropanated mycolic acids are key factors participating in cell envelope permeability, host immunomodulation and persistence. The chain is Cyclopropane mycolic acid synthase 1 (cmaA1) from Mycobacterium tuberculosis (strain CDC 1551 / Oshkosh).